The sequence spans 470 residues: Cell division protein FtsA (470 aa).

The tract at residues 416 to 470 (NKKDTHENEVESTDEEIYQSEDNHQEHKQNHEHVQDKDKDKEESKFKKLMKSLFE) is disordered. Acidic residues predominate over residues 425-434 (VESTDEEIYQ). The segment covering 436–461 (EDNHQEHKQNHEHVQDKDKDKEESKF) has biased composition (basic and acidic residues).

This sequence belongs to the FtsA/MreB family. As to quaternary structure, self-interacts. Interacts with FtsZ.

The protein resides in the cell membrane. Functionally, cell division protein that is involved in the assembly of the Z ring. May serve as a membrane anchor for the Z ring. This is Cell division protein FtsA from Staphylococcus aureus (strain NCTC 8325 / PS 47).